The sequence spans 236 residues: MTKQLILENVSFRYGKTGPWIVDHVSCEVHSGDFIGIIGPNGGGKTTLTQLMLGLLQPVCGKIFTCFTQENRPLSIGWVPQHFAYDAAFPITVKETVLSGRLATLPWYGRYTKKDHDAAEEALHTVDLLEYKDSCFSHLSGGQIQRVLLARALSARPKFLLLDEPTANIDPSNQQKILQILSDLNKHCTILMITHDLHHTAGCFNRVFFMNKKLTALADTTTISERFCCNTFGKCS.

The ABC transporter domain maps to 5–236 (LILENVSFRY…FCCNTFGKCS (232 aa)). ATP is bound at residue 39 to 46 (GPNGGGKT).

This sequence belongs to the ABC transporter superfamily.

It localises to the cell inner membrane. Its function is as follows. Part of an ATP-driven transport system TC_0696/TC_0697/TC_0698 for a metal. Probably responsible for energy coupling to the transport system. This chain is Probable metal transport system ATP-binding protein TC_0697, found in Chlamydia muridarum (strain MoPn / Nigg).